Here is a 172-residue protein sequence, read N- to C-terminus: Translationally-controlled tumor protein homolog (172 aa).

A TCTP domain is found at 1–172 (MIIYRDCISQ…FKDGLEIEKC (172 aa)). S46 is modified (phosphoserine; by PLK1).

Belongs to the TCTP family.

It localises to the cytoplasm. In terms of biological role, involved in calcium binding and microtubule stabilization. This chain is Translationally-controlled tumor protein homolog (TPT1), found in Gallus gallus (Chicken).